Consider the following 341-residue polypeptide: Paired box protein Pax-9 (341 aa).

Residues 4–130 (AFGEVNQLGG…SSISRILRNK (127 aa)) constitute a DNA-binding region (paired). The interval 7–63 (EVNQLGGVFVNGRPLPNAIRLRIVELAQLGIRPCDISRQLRVSHGCVSKILARYNET) is PAI subdomain. The segment at 82-130 (TVVKHIRTYKQRDPGIFAWEIRDRLLADGVCDKYNVPSVSSISRILRNK) is RED subdomain. The tract at residues 168-189 (AAAAKVPTPPGVPAIPGSVAMP) is interaction with KDM5B.

In terms of assembly, interacts with KDM5B.

The protein localises to the nucleus. Its function is as follows. Transcription factor required for normal development of thymus, parathyroid glands, ultimobranchial bodies, teeth, skeletal elements of skull and larynx as well as distal limbs. This chain is Paired box protein Pax-9 (PAX9), found in Saguinus oedipus (Cotton-top tamarin).